The following is a 558-amino-acid chain: MERGAGLWLGLLAVFFVLTYLVPLEGRLLWQPDETRYAEISREMLASGDWMVPHLLGLRYFEKPLAGYWMNNIGQWLFGSTNFAVRFASVFSTGLSALLVFTVSWTVGRQLRQSLLAALIFLSLLLVFGVGTYSVLDPMIALWLNAAMAAHVFALRADRRTTRGVAWLLLGLACGLGFMTKGFLALVVPAIAVLPVALYYRQLKATLGYGALAALLAVLVNLPWALALSRLEPDFWHYFFWVEHIQRFAAENAQHRAPFWFYLPVLALGSLPWLGLLPGAMAAGWRARRVQPERFLLLCWVVMPLLFFSVAKGKLLTYILPCMAPLALLLAAYGRECADKLRSKVFDANAGINTAFALCAIVALLLAGSGLLPWARIYSVGEWPRIVIGTLVFAGWLCFAAVSRRSQGDRWALAAFCPLLLSLLVGQIIPQRIIDGNQPQEFIRRYETTLNQSRYVLSNHVGVATALAWELERNDVLMYDDKGELAYGLEYADVQGRHLSRDDFPHWLAKERLKGDVALLLLLDRRQDLPPGLPKADKVHRNHRIALLHYQQLPCCEQ.

12 helical membrane passes run 4–24 (GAGL…LVPL), 87–107 (FASV…SWTV), 115–135 (LLAA…TYSV), 136–156 (LDPM…FALR), 178–198 (FMTK…PVAL), 207–227 (LGYG…WALA), 257–277 (APFW…LGLL), 295–315 (FLLL…KGKL), 316–336 (LTYI…YGRE), 355–375 (AFAL…LPWA), 383–403 (WPRI…AAVS), and 411–431 (WALA…IIPQ).

It belongs to the glycosyltransferase 83 family.

It localises to the cell inner membrane. The enzyme catalyses 4-amino-4-deoxy-alpha-L-arabinopyranosyl di-trans,octa-cis-undecaprenyl phosphate + lipid IVA = lipid IIA + di-trans,octa-cis-undecaprenyl phosphate.. Its pathway is lipopolysaccharide metabolism; 4-amino-4-deoxy-beta-L-arabinose-lipid A biosynthesis. Functionally, catalyzes the transfer of the L-Ara4N moiety of the glycolipid undecaprenyl phosphate-alpha-L-Ara4N to lipid A. The modified arabinose is attached to lipid A and is required for resistance to polymyxin and cationic antimicrobial peptides. The chain is Undecaprenyl phosphate-alpha-4-amino-4-deoxy-L-arabinose arabinosyl transferase 1 from Sodalis glossinidius (strain morsitans).